The primary structure comprises 360 residues: Protein NDRG2 (360 aa).

The disordered stretch occupies residues 325 to 360 (RTASLSSEGNRSRSRTLSQSSESGGGPPAPLAEVTC).

It belongs to the NDRG family.

Its subcellular location is the cytoplasm. Functionally, contributes to the regulation of the Wnt signaling pathway. Down-regulates CTNNB1-mediated transcriptional activation of target genes. May be involved in neuron differentiation. The chain is Protein NDRG2 from Xenopus tropicalis (Western clawed frog).